The chain runs to 306 residues: Extensin (306 aa).

Residues methionine 1–alanine 32 form the signal peptide. The segment at lysine 33 to tyrosine 306 is disordered. 4 stretches are compositionally biased toward pro residues: residues serine 38–serine 122, serine 133–serine 152, serine 183–serine 214, and serine 225–proline 290.

Post-translationally, hydroxylated on proline residues in the S-P-P-P-P repeat. O-glycosylated on hydroxyprolines.

It is found in the secreted. The protein resides in the primary cell wall. Functionally, structural component in primary cell wall. The polypeptide is Extensin (Daucus carota (Wild carrot)).